Consider the following 508-residue polypeptide: Maturase K (508 aa).

It belongs to the intron maturase 2 family. MatK subfamily.

It localises to the plastid. It is found in the chloroplast. In terms of biological role, usually encoded in the trnK tRNA gene intron. Probably assists in splicing its own and other chloroplast group II introns. The chain is Maturase K from Gordonia lasianthus (Loblolly bay).